A 152-amino-acid chain; its full sequence is Large ribosomal subunit protein bL9 (152 aa).

This sequence belongs to the bacterial ribosomal protein bL9 family.

Functionally, binds to the 23S rRNA. The polypeptide is Large ribosomal subunit protein bL9 (Trichormus variabilis (strain ATCC 29413 / PCC 7937) (Anabaena variabilis)).